The chain runs to 238 residues: Ribosomal RNA small subunit methyltransferase G (238 aa).

S-adenosyl-L-methionine-binding positions include glycine 77, phenylalanine 82, 128–129 (AE), and arginine 147. Residues 219–238 (RQTPKKYPRKAGLPNKEPIE) form a disordered region.

This sequence belongs to the methyltransferase superfamily. RNA methyltransferase RsmG family.

The protein resides in the cytoplasm. Its function is as follows. Specifically methylates the N7 position of guanine in position 535 of 16S rRNA. This is Ribosomal RNA small subunit methyltransferase G from Oceanobacillus iheyensis (strain DSM 14371 / CIP 107618 / JCM 11309 / KCTC 3954 / HTE831).